We begin with the raw amino-acid sequence, 462 residues long: Asparagine--tRNA ligase (462 aa).

This sequence belongs to the class-II aminoacyl-tRNA synthetase family. Homodimer.

Its subcellular location is the cytoplasm. The catalysed reaction is tRNA(Asn) + L-asparagine + ATP = L-asparaginyl-tRNA(Asn) + AMP + diphosphate + H(+). The sequence is that of Asparagine--tRNA ligase from Synechocystis sp. (strain ATCC 27184 / PCC 6803 / Kazusa).